Here is a 286-residue protein sequence, read N- to C-terminus: Bifunctional protein FolD (286 aa).

Residues 165 to 167 and serine 190 each bind NADP(+); that span reads GRS.

Belongs to the tetrahydrofolate dehydrogenase/cyclohydrolase family. Homodimer.

It carries out the reaction (6R)-5,10-methylene-5,6,7,8-tetrahydrofolate + NADP(+) = (6R)-5,10-methenyltetrahydrofolate + NADPH. The catalysed reaction is (6R)-5,10-methenyltetrahydrofolate + H2O = (6R)-10-formyltetrahydrofolate + H(+). It functions in the pathway one-carbon metabolism; tetrahydrofolate interconversion. Its function is as follows. Catalyzes the oxidation of 5,10-methylenetetrahydrofolate to 5,10-methenyltetrahydrofolate and then the hydrolysis of 5,10-methenyltetrahydrofolate to 10-formyltetrahydrofolate. The polypeptide is Bifunctional protein FolD (Burkholderia cenocepacia (strain ATCC BAA-245 / DSM 16553 / LMG 16656 / NCTC 13227 / J2315 / CF5610) (Burkholderia cepacia (strain J2315))).